We begin with the raw amino-acid sequence, 168 residues long: Photosystem I assembly protein Ycf3 (168 aa).

TPR repeat units lie at residues 35–68 (AFTYYRDGMSAQSEGNYAEALQNYYEAMRLEIDP), 72–105 (SYILYNIGLIHTSNGEHTKALEYYFRALERNPFL), and 120–153 (GEQAIQQGDSEIAEAWFDQAAEYWKQAIALTPGN).

This sequence belongs to the Ycf3 family.

The protein localises to the plastid. It localises to the chloroplast thylakoid membrane. Its function is as follows. Essential for the assembly of the photosystem I (PSI) complex. May act as a chaperone-like factor to guide the assembly of the PSI subunits. This is Photosystem I assembly protein Ycf3 from Solanum bulbocastanum (Wild potato).